The following is a 96-amino-acid chain: Co-chaperonin GroES (96 aa).

This sequence belongs to the GroES chaperonin family. In terms of assembly, heptamer of 7 subunits arranged in a ring. Interacts with the chaperonin GroEL.

The protein localises to the cytoplasm. In terms of biological role, together with the chaperonin GroEL, plays an essential role in assisting protein folding. The GroEL-GroES system forms a nano-cage that allows encapsulation of the non-native substrate proteins and provides a physical environment optimized to promote and accelerate protein folding. GroES binds to the apical surface of the GroEL ring, thereby capping the opening of the GroEL channel. The protein is Co-chaperonin GroES of Histophilus somni (strain 129Pt) (Haemophilus somnus).